A 120-amino-acid polypeptide reads, in one-letter code: Flagellar protein FliT (120 aa).

The interval 1–50 is required for homodimerization; it reads MNDSSLSLKKWHALSALSNTMLSLAQSGKWDELIEQEVAYVSLVEKISIT. Residues 59-97 form a fliD binding region; the sequence is IQDQAMVMLNNVLQNEMTLKTLLQERMDELHGLMAQTGK.

It belongs to the FliT family. Homodimer. Interacts with FliD and FlhC.

It localises to the cytoplasm. Its subcellular location is the cytosol. Dual-function protein that regulates the transcription of class 2 flagellar operons and that also acts as an export chaperone for the filament-capping protein FliD. As a transcriptional regulator, acts as an anti-FlhDC factor; it directly binds FlhC, thus inhibiting the binding of the FlhC/FlhD complex to class 2 promoters, resulting in decreased expression of class 2 flagellar operons. As a chaperone, effects FliD transition to the membrane by preventing its premature polymerization, and by directing it to the export apparatus. This is Flagellar protein FliT from Enterobacter sp. (strain 638).